Consider the following 138-residue polypeptide: Ribosome-binding factor A (138 aa).

It belongs to the RbfA family. In terms of assembly, monomer. Binds 30S ribosomal subunits, but not 50S ribosomal subunits or 70S ribosomes.

It is found in the cytoplasm. Its function is as follows. One of several proteins that assist in the late maturation steps of the functional core of the 30S ribosomal subunit. Associates with free 30S ribosomal subunits (but not with 30S subunits that are part of 70S ribosomes or polysomes). Required for efficient processing of 16S rRNA. May interact with the 5'-terminal helix region of 16S rRNA. This Bradyrhizobium sp. (strain ORS 278) protein is Ribosome-binding factor A.